The sequence spans 657 residues: Glycogen debranching enzyme (657 aa).

Aspartate 336 functions as the Nucleophile in the catalytic mechanism. The active-site Proton donor is the glutamate 371. Over residues 458–467 the composition is skewed to basic and acidic residues; sequence NEANGEENRD. A disordered region spans residues 458–479; it reads NEANGEENRDGTNNNYSNNHGK.

This sequence belongs to the glycosyl hydrolase 13 family.

It carries out the reaction Hydrolysis of (1-&gt;6)-alpha-D-glucosidic linkages to branches with degrees of polymerization of three or four glucose residues in limit dextrin.. It functions in the pathway glycan degradation; glycogen degradation. In terms of biological role, removes maltotriose and maltotetraose chains that are attached by 1,6-alpha-linkage to the limit dextrin main chain, generating a debranched limit dextrin. This is Glycogen debranching enzyme from Escherichia coli O139:H28 (strain E24377A / ETEC).